The chain runs to 576 residues: Sulfite reductase [NADPH] hemoprotein beta-component (576 aa).

Positions 434, 440, 479, and 483 each coordinate [4Fe-4S] cluster. Cys483 provides a ligand contact to siroheme.

Belongs to the nitrite and sulfite reductase 4Fe-4S domain family. As to quaternary structure, alpha(8)-beta(8). The alpha component is a flavoprotein, the beta component is a hemoprotein. Requires siroheme as cofactor. It depends on [4Fe-4S] cluster as a cofactor.

The catalysed reaction is hydrogen sulfide + 3 NADP(+) + 3 H2O = sulfite + 3 NADPH + 4 H(+). It functions in the pathway sulfur metabolism; hydrogen sulfide biosynthesis; hydrogen sulfide from sulfite (NADPH route): step 1/1. In terms of biological role, component of the sulfite reductase complex that catalyzes the 6-electron reduction of sulfite to sulfide. This is one of several activities required for the biosynthesis of L-cysteine from sulfate. The chain is Sulfite reductase [NADPH] hemoprotein beta-component from Oceanobacillus iheyensis (strain DSM 14371 / CIP 107618 / JCM 11309 / KCTC 3954 / HTE831).